Consider the following 182-residue polypeptide: Large ribosomal subunit protein bL25 (182 aa).

It belongs to the bacterial ribosomal protein bL25 family. CTC subfamily. In terms of assembly, part of the 50S ribosomal subunit; part of the 5S rRNA/L5/L18/L25 subcomplex. Contacts the 5S rRNA. Binds to the 5S rRNA independently of L5 and L18.

Its function is as follows. This is one of the proteins that binds to the 5S RNA in the ribosome where it forms part of the central protuberance. This chain is Large ribosomal subunit protein bL25, found in Borreliella burgdorferi (strain ZS7) (Borrelia burgdorferi).